A 183-amino-acid chain; its full sequence is Phosphinothricin N-acetyltransferase (183 aa).

The N-acetyltransferase domain maps to 8 to 173; that stretch reads ADIRRATEAD…WQLDFSLPVP (166 aa). Acetyl-CoA is bound by residues 91–93, 99–104, and Asn-130; these read VYV and RTGLGS.

This sequence belongs to the acetyltransferase family. PAT/BAR subfamily.

It catalyses the reaction phosphinothricin + acetyl-CoA = N-acetylphosphinothricin + CoA + H(+). In terms of biological role, inactivates phosphinothricin (PPT) by transfer of an acetyl group from acetyl CoA. Can also acetylate demethylphosphinothricin but not PTT or glutamate. This enzyme is an effector of phosphinothricin tripeptide (PTT or bialaphos) resistance. The chain is Phosphinothricin N-acetyltransferase from Streptomyces hygroscopicus.